The sequence spans 304 residues: Putative S-adenosyl-L-methionine-dependent methyltransferase MUL_0816 (304 aa).

S-adenosyl-L-methionine contacts are provided by residues Asp130 and 159 to 160 (DL).

Belongs to the UPF0677 family.

Functionally, exhibits S-adenosyl-L-methionine-dependent methyltransferase activity. The polypeptide is Putative S-adenosyl-L-methionine-dependent methyltransferase MUL_0816 (Mycobacterium ulcerans (strain Agy99)).